A 486-amino-acid chain; its full sequence is Ribosomal protein uS12 methylthiotransferase RimO (486 aa).

An MTTase N-terminal domain is found at 9-125; that stretch reads RSVALVTLGC…LSSHLEAILH (117 aa). Residues cysteine 18, cysteine 54, cysteine 88, cysteine 191, cysteine 195, and cysteine 198 each contribute to the [4Fe-4S] cluster site. Residues 177 to 408 form the Radical SAM core domain; the sequence is LGSGPWAPVK…RLVEELVTQR (232 aa). In terms of domain architecture, TRAM spans 410 to 482; the sequence is EERLGEVVEV…GADLLAEPLV (73 aa).

The protein belongs to the methylthiotransferase family. RimO subfamily. It depends on [4Fe-4S] cluster as a cofactor.

It is found in the cytoplasm. It carries out the reaction L-aspartate(89)-[ribosomal protein uS12]-hydrogen + (sulfur carrier)-SH + AH2 + 2 S-adenosyl-L-methionine = 3-methylsulfanyl-L-aspartate(89)-[ribosomal protein uS12]-hydrogen + (sulfur carrier)-H + 5'-deoxyadenosine + L-methionine + A + S-adenosyl-L-homocysteine + 2 H(+). Catalyzes the methylthiolation of an aspartic acid residue of ribosomal protein uS12. This is Ribosomal protein uS12 methylthiotransferase RimO from Kineococcus radiotolerans (strain ATCC BAA-149 / DSM 14245 / SRS30216).